We begin with the raw amino-acid sequence, 373 residues long: MVDIDYYELLEVDRNASFEEIKKAYRKLALKYHPDRNPDNPEAEEKFKLINEAYQVLSDEEKRALYDQYGKAGLENQGFSGFNQKSFDDIMDFFESVFGETFGGGFGSRRRSDEKYPLDLSIEMEISFQEALFGTQKEVHYSFKVPCSACKGTGAKDGKLTACPECHGRGQIYYRQGFMTFSQTCPRCHGQGEVAQEHCEECSGKGYRIEKEKITIDIPEGIDSGNRIRAQSRGNVSASGMRGDLYITVFVQEDDHFVRYNDDIYMEVPIFFTQAALGETITIPTPRGERELQLNVGTKDKEQFVFKGEGFKNVHTGKKGNLIAQVKIIYPTSLNDEQKELLHKLQESFGVESKPHEEKFSSIFEKVKNWFTK.

A J domain is found at Asp5 to Gly70. Residues Gly134–Lys211 form a CR-type zinc finger. 8 residues coordinate Zn(2+): Cys147, Cys150, Cys163, Cys166, Cys185, Cys188, Cys199, and Cys202. CXXCXGXG motif repeat units lie at residues Cys147–Gly154, Cys163–Gly170, Cys185–Gly192, and Cys199–Gly206.

It belongs to the DnaJ family. As to quaternary structure, homodimer. Zn(2+) is required as a cofactor.

The protein localises to the cytoplasm. Its function is as follows. Participates actively in the response to hyperosmotic and heat shock by preventing the aggregation of stress-denatured proteins and by disaggregating proteins, also in an autonomous, DnaK-independent fashion. Unfolded proteins bind initially to DnaJ; upon interaction with the DnaJ-bound protein, DnaK hydrolyzes its bound ATP, resulting in the formation of a stable complex. GrpE releases ADP from DnaK; ATP binding to DnaK triggers the release of the substrate protein, thus completing the reaction cycle. Several rounds of ATP-dependent interactions between DnaJ, DnaK and GrpE are required for fully efficient folding. Also involved, together with DnaK and GrpE, in the DNA replication of plasmids through activation of initiation proteins. This is Chaperone protein DnaJ from Nitratiruptor sp. (strain SB155-2).